Here is a 322-residue protein sequence, read N- to C-terminus: 4-hydroxy-3-methylbut-2-enyl diphosphate reductase (322 aa).

[4Fe-4S] cluster is bound at residue Cys12. The (2E)-4-hydroxy-3-methylbut-2-enyl diphosphate site is built by His43 and His81. Residues His43 and His81 each coordinate dimethylallyl diphosphate. Isopentenyl diphosphate-binding residues include His43 and His81. Cys103 serves as a coordination point for [4Fe-4S] cluster. His131 contacts (2E)-4-hydroxy-3-methylbut-2-enyl diphosphate. Residue His131 participates in dimethylallyl diphosphate binding. Isopentenyl diphosphate is bound at residue His131. Glu133 (proton donor) is an active-site residue. Residue Thr172 coordinates (2E)-4-hydroxy-3-methylbut-2-enyl diphosphate. Cys200 serves as a coordination point for [4Fe-4S] cluster. (2E)-4-hydroxy-3-methylbut-2-enyl diphosphate contacts are provided by Ser228, Asn230, and Ser273. Positions 228, 230, and 273 each coordinate dimethylallyl diphosphate. The isopentenyl diphosphate site is built by Ser228, Asn230, and Ser273.

It belongs to the IspH family. It depends on [4Fe-4S] cluster as a cofactor.

The enzyme catalyses isopentenyl diphosphate + 2 oxidized [2Fe-2S]-[ferredoxin] + H2O = (2E)-4-hydroxy-3-methylbut-2-enyl diphosphate + 2 reduced [2Fe-2S]-[ferredoxin] + 2 H(+). The catalysed reaction is dimethylallyl diphosphate + 2 oxidized [2Fe-2S]-[ferredoxin] + H2O = (2E)-4-hydroxy-3-methylbut-2-enyl diphosphate + 2 reduced [2Fe-2S]-[ferredoxin] + 2 H(+). It functions in the pathway isoprenoid biosynthesis; dimethylallyl diphosphate biosynthesis; dimethylallyl diphosphate from (2E)-4-hydroxy-3-methylbutenyl diphosphate: step 1/1. The protein operates within isoprenoid biosynthesis; isopentenyl diphosphate biosynthesis via DXP pathway; isopentenyl diphosphate from 1-deoxy-D-xylulose 5-phosphate: step 6/6. Catalyzes the conversion of 1-hydroxy-2-methyl-2-(E)-butenyl 4-diphosphate (HMBPP) into a mixture of isopentenyl diphosphate (IPP) and dimethylallyl diphosphate (DMAPP). Acts in the terminal step of the DOXP/MEP pathway for isoprenoid precursor biosynthesis. In Macrococcus caseolyticus (strain JCSC5402) (Macrococcoides caseolyticum), this protein is 4-hydroxy-3-methylbut-2-enyl diphosphate reductase.